The primary structure comprises 281 residues: MFLKDIHQFFLGFVITNTIIVIIGQINLQFKNSYNIVSGLKVQQLDSIKYYCKVLTHDSSCLFFRNCLAVIDSIIVNIDEYLSLSPFKRREKFLQDVESLNNPSVPARLFINPKKDFILIHRKGVSLKIRSTFQMYSIYKFNVSVSKNAAIFNTLRPSDFISFLEYYSDMNINEILINVLNNYGLNDISLFLVKKIFYLFDSDKIFFNEFIGVDSVPLEYFLLFLSKKYIIRARKESPLKIYTDFEDFYIHGSFKNILKMQQQKIKQNLGFKTKSNFFTGI.

It is found in the plastid. The protein localises to the chloroplast. This is an uncharacterized protein from Euglena gracilis.